A 271-amino-acid polypeptide reads, in one-letter code: Phosphatidylinositol transfer protein alpha isoform (271 aa).

Residues Thr59, Lys61, Glu86, Asn90, Thr97, and Lys195 each contribute to the a 1,2-diacyl-sn-glycero-3-phospho-(1D-myo-inositol) site. Lys216 is modified (N6-acetyllysine). Residues 251–264 (TKRQLDEMRQKDPV) are compositionally biased toward basic and acidic residues. Residues 251–271 (TKRQLDEMRQKDPVKGMTADD) are disordered.

It belongs to the PtdIns transfer protein family. PI transfer class I subfamily. Post-translationally, phosphorylated by PKC in a calcium and phosphatidylserine-dependent manner.

It localises to the cytoplasm. The protein localises to the nucleus. It catalyses the reaction a 1,2-diacyl-sn-glycero-3-phosphocholine(in) = a 1,2-diacyl-sn-glycero-3-phosphocholine(out). The enzyme catalyses a 1,2-diacyl-sn-glycero-3-phospho-(1D-myo-inositol)(in) = a 1,2-diacyl-sn-glycero-3-phospho-(1D-myo-inositol)(out). In terms of biological role, catalyzes the transfer of phosphatidylinositol (PI) and phosphatidylcholine (PC) between membranes. Shows a preference for PI and PC containing shorter saturated or monosaturated acyl chains at the sn-1 and sn-2 positions. Preference order for PC is C16:1 &gt; C16:0 &gt; C18:1 &gt; C18:0 &gt; C20:4 and for PI is C16:1 &gt; C16:0 &gt; C18:1 &gt; C18:0 &gt; C20:4 &gt; C20:3. The protein is Phosphatidylinositol transfer protein alpha isoform (Pitpna) of Mus musculus (Mouse).